A 667-amino-acid polypeptide reads, in one-letter code: Probable potassium transport system protein Kup (667 aa).

12 helical membrane passes run 16–36 (GFII…LYTM), 58–78 (VSLI…LIAL), 101–121 (WLII…ALTP), 146–166 (TNVI…QRFG), 167–187 (TGVI…VLGI), 221–241 (IFIL…YSDL), 253–273 (WPFV…WILA), 294–314 (VYLV…LISG), 343–363 (LYIP…VLYF), 373–393 (YGLA…YYLI), 399–419 (PLLA…FFLA), and 431–451 (VVVL…GTVI).

The protein belongs to the HAK/KUP transporter (TC 2.A.72) family.

It localises to the cell membrane. It carries out the reaction K(+)(in) + H(+)(in) = K(+)(out) + H(+)(out). Functionally, transport of potassium into the cell. Likely operates as a K(+):H(+) symporter. This chain is Probable potassium transport system protein Kup, found in Streptococcus equi subsp. zooepidemicus (strain H70).